A 254-amino-acid chain; its full sequence is Type III pantothenate kinase (254 aa).

Residue 6–13 (DVGNTNIV) participates in ATP binding. Residue 107–110 (GADR) participates in substrate binding. Catalysis depends on D109, which acts as the Proton acceptor. Position 129 (D129) interacts with K(+). T132 provides a ligand contact to ATP. T184 contacts substrate.

The protein belongs to the type III pantothenate kinase family. Homodimer. NH4(+) serves as cofactor. K(+) is required as a cofactor.

Its subcellular location is the cytoplasm. The catalysed reaction is (R)-pantothenate + ATP = (R)-4'-phosphopantothenate + ADP + H(+). It participates in cofactor biosynthesis; coenzyme A biosynthesis; CoA from (R)-pantothenate: step 1/5. Functionally, catalyzes the phosphorylation of pantothenate (Pan), the first step in CoA biosynthesis. In Exiguobacterium sp. (strain ATCC BAA-1283 / AT1b), this protein is Type III pantothenate kinase.